The primary structure comprises 339 residues: Anthranilate phosphoribosyltransferase (339 aa).

Residues G82, 85 to 86, 92 to 95, 110 to 118, and S122 contribute to the 5-phospho-alpha-D-ribose 1-diphosphate site; these read GD, NIST, and KHGNRGISS. An anthranilate-binding site is contributed by G82. Residue S94 participates in Mg(2+) binding. N113 provides a ligand contact to anthranilate. R168 is a binding site for anthranilate. Residues D227 and E228 each contribute to the Mg(2+) site.

The protein belongs to the anthranilate phosphoribosyltransferase family. As to quaternary structure, homodimer. Mg(2+) is required as a cofactor.

The enzyme catalyses N-(5-phospho-beta-D-ribosyl)anthranilate + diphosphate = 5-phospho-alpha-D-ribose 1-diphosphate + anthranilate. It functions in the pathway amino-acid biosynthesis; L-tryptophan biosynthesis; L-tryptophan from chorismate: step 2/5. Functionally, catalyzes the transfer of the phosphoribosyl group of 5-phosphorylribose-1-pyrophosphate (PRPP) to anthranilate to yield N-(5'-phosphoribosyl)-anthranilate (PRA). The chain is Anthranilate phosphoribosyltransferase from Vesicomyosocius okutanii subsp. Calyptogena okutanii (strain HA).